A 398-amino-acid polypeptide reads, in one-letter code: LL-diaminopimelate aminotransferase (398 aa).

Residues Y14 and G41 each coordinate substrate. Pyridoxal 5'-phosphate contacts are provided by residues Y71, 104–105, Y128, N174, Y205, and 233–235; these read AK and SFS. 3 residues coordinate substrate: K105, Y128, and N174. The residue at position 236 (K236) is an N6-(pyridoxal phosphate)lysine. Pyridoxal 5'-phosphate is bound by residues R244 and N275. Substrate-binding residues include N275 and R368.

This sequence belongs to the class-I pyridoxal-phosphate-dependent aminotransferase family. LL-diaminopimelate aminotransferase subfamily. In terms of assembly, homodimer. The cofactor is pyridoxal 5'-phosphate.

The enzyme catalyses (2S,6S)-2,6-diaminopimelate + 2-oxoglutarate = (S)-2,3,4,5-tetrahydrodipicolinate + L-glutamate + H2O + H(+). It functions in the pathway amino-acid biosynthesis; L-lysine biosynthesis via DAP pathway; LL-2,6-diaminopimelate from (S)-tetrahydrodipicolinate (aminotransferase route): step 1/1. Functionally, involved in the synthesis of meso-diaminopimelate (m-DAP or DL-DAP), required for both lysine and peptidoglycan biosynthesis. Catalyzes the direct conversion of tetrahydrodipicolinate to LL-diaminopimelate. This Chlamydia felis (strain Fe/C-56) (Chlamydophila felis) protein is LL-diaminopimelate aminotransferase.